The sequence spans 706 residues: Transmembrane and coiled-coil domains protein 2 (706 aa).

Disordered stretches follow at residues 1–221 and 251–280; these read MKRC…TTDT and VALS…PDPQ. Position 6 is a phosphoserine (Ser6). A compositionally biased stretch (basic residues) spans 83–94; that stretch reads GLKHLFHSRRRS. Positions 102-112 are enriched in low complexity; sequence SQEAQQQQQQQ. Residues 120–131 show a composition bias toward basic and acidic residues; sequence PDEKERSPEMHR. Arg163 is modified (omega-N-methylarginine). A coiled-coil region spans residues 330–365; that stretch reads KQVFEKKNQKSAQTIAQLHKKLEHYRRRLKEIEQNG. Ser435 is modified (phosphoserine). The disordered stretch occupies residues 440–459; sequence AHLKDPMEDGPPEEAARALS. Residues Ser461 and Ser467 each carry the phosphoserine modification. A disordered region spans residues 464–510; that stretch reads LVSSPKYGSDDECSSASASSAGAGSNSGAGPGGALGSPRSNTLYGAP. Over residues 477–487 the composition is skewed to low complexity; the sequence is SSASASSAGAG. Positions 488–498 are enriched in gly residues; that stretch reads SNSGAGPGGAL. Phosphoserine is present on Ser500. Positions 511 to 630 form a coiled coil; that stretch reads GNLDTLLEEL…QQQQVVQLEG (120 aa). 2 helical membrane-spanning segments follow: residues 646–666 and 679–699; these read VILA…NFIT and ALLL…TYLL.

Belongs to the TEX28 family. In terms of assembly, may form homodimers and heterodimers with TMCC2 or TMCC3 via the coiled-coil domains. Interacts with ribosomal proteins RPL4 and RPS6. Interacts with APOE and proteolytic processed C-terminal fragment C99 of the amyloid precursor protein (APP C99).

The protein resides in the endoplasmic reticulum membrane. Its function is as follows. May be involved in the regulation of the proteolytic processing of the amyloid precursor protein (APP) possibly also implicating APOE. The chain is Transmembrane and coiled-coil domains protein 2 from Mus musculus (Mouse).